The primary structure comprises 407 residues: Phosphopentomutase (407 aa).

Mn(2+) is bound by residues Asp10, Asp306, His311, Asp347, His348, and His359.

This sequence belongs to the phosphopentomutase family. It depends on Mn(2+) as a cofactor.

It localises to the cytoplasm. The enzyme catalyses 2-deoxy-alpha-D-ribose 1-phosphate = 2-deoxy-D-ribose 5-phosphate. It catalyses the reaction alpha-D-ribose 1-phosphate = D-ribose 5-phosphate. Its pathway is carbohydrate degradation; 2-deoxy-D-ribose 1-phosphate degradation; D-glyceraldehyde 3-phosphate and acetaldehyde from 2-deoxy-alpha-D-ribose 1-phosphate: step 1/2. Isomerase that catalyzes the conversion of deoxy-ribose 1-phosphate (dRib-1-P) and ribose 1-phosphate (Rib-1-P) to deoxy-ribose 5-phosphate (dRib-5-P) and ribose 5-phosphate (Rib-5-P), respectively. The chain is Phosphopentomutase from Yersinia enterocolitica serotype O:8 / biotype 1B (strain NCTC 13174 / 8081).